A 688-amino-acid chain; its full sequence is Lectin-domain containing receptor kinase VI.3 (688 aa).

The signal sequence occupies residues 1 to 14 (MLVLFLLLTIPTRA). The Extracellular segment spans residues 15 to 306 (QRTTTETPKT…KRGYNSQVLA (292 aa)). Residues 22-271 (PKTEFIFRGF…AHYVMGWSFS (250 aa)) are legume-lectin like. A helical transmembrane segment spans residues 307-327 (LIVALSGVTVILLALLFFFVM). The Cytoplasmic segment spans residues 328–688 (YKKRLQQGEV…VSSSSVISGR (361 aa)). Residues 361-640 (FKENRIVGTG…LNGDDDVPEI (280 aa)) form the Protein kinase domain. Residues 367–375 (VGTGGFGTV) and lysine 391 each bind ATP. The Proton acceptor role is filled by aspartate 490. The disordered stretch occupies residues 662-688 (VSSDRASSSVPSFSVTRVSSSSVISGR).

This sequence in the C-terminal section; belongs to the protein kinase superfamily. Ser/Thr protein kinase family. The protein in the N-terminal section; belongs to the leguminous lectin family.

It localises to the cell membrane. The catalysed reaction is L-seryl-[protein] + ATP = O-phospho-L-seryl-[protein] + ADP + H(+). It catalyses the reaction L-threonyl-[protein] + ATP = O-phospho-L-threonyl-[protein] + ADP + H(+). Functionally, involved in negative regulation of abscisic acid response in seed germination. This is Lectin-domain containing receptor kinase VI.3 (LECRK63) from Arabidopsis thaliana (Mouse-ear cress).